The primary structure comprises 379 residues: NADH-quinone oxidoreductase subunit D 2 (379 aa).

The protein belongs to the complex I 49 kDa subunit family. NDH-1 is composed of 14 different subunits. Subunits NuoB, C, D, E, F, and G constitute the peripheral sector of the complex.

It localises to the cell inner membrane. The enzyme catalyses a quinone + NADH + 5 H(+)(in) = a quinol + NAD(+) + 4 H(+)(out). In terms of biological role, NDH-1 shuttles electrons from NADH, via FMN and iron-sulfur (Fe-S) centers, to quinones in the respiratory chain. The immediate electron acceptor for the enzyme in this species is believed to be ubiquinone. Couples the redox reaction to proton translocation (for every two electrons transferred, four hydrogen ions are translocated across the cytoplasmic membrane), and thus conserves the redox energy in a proton gradient. This Anaeromyxobacter dehalogenans (strain 2CP-C) protein is NADH-quinone oxidoreductase subunit D 2.